Consider the following 512-residue polypeptide: Inosine-5'-monophosphate dehydrogenase (512 aa).

CBS domains lie at 110-169 (FIMK…SAPV) and 173-231 (MTRR…PNSS). NAD(+)-binding positions include 268-270 (DSS) and 318-320 (GMG). K(+) is bound by residues Gly-320 and Gly-322. Residue Ser-323 participates in IMP binding. Residue Cys-325 participates in K(+) binding. Cys-325 (thioimidate intermediate) is an active-site residue. Residues 358–360 (DGG), 381–382 (GS), and 405–409 (YRGMG) each bind IMP. Residue Arg-423 is the Proton acceptor of the active site. Residue Gln-435 participates in IMP binding. K(+)-binding residues include Glu-494 and Gly-495. A Microbody targeting signal motif is present at residues 510 to 512 (SKL).

The protein belongs to the IMPDH/GMPR family. Homotetramer. K(+) serves as cofactor.

Its subcellular location is the glycosome. The catalysed reaction is IMP + NAD(+) + H2O = XMP + NADH + H(+). The protein operates within purine metabolism; XMP biosynthesis via de novo pathway; XMP from IMP: step 1/1. Mycophenolic acid (MPA) is a non-competitive inhibitor that prevents formation of the closed enzyme conformation by binding to the same site as the amobile flap. In contrast, mizoribine monophosphate (MZP) is a competitive inhibitor that induces the closed conformation. MPA is a potent inhibitor of mammalian IMPDHs but a poor inhibitor of the bacterial enzymes. MZP is a more potent inhibitor of bacterial IMPDH. In terms of biological role, catalyzes the conversion of inosine 5'-phosphate (IMP) to xanthosine 5'-phosphate (XMP), the first committed and rate-limiting step in the de novo synthesis of guanine nucleotides, and therefore plays an important role in the regulation of cell growth. This chain is Inosine-5'-monophosphate dehydrogenase, found in Trypanosoma brucei brucei.